Here is a 119-residue protein sequence, read N- to C-terminus: Large ribosomal subunit protein uL18 (119 aa).

The protein belongs to the universal ribosomal protein uL18 family. As to quaternary structure, part of the 50S ribosomal subunit; part of the 5S rRNA/L5/L18/L25 subcomplex. Contacts the 5S and 23S rRNAs.

In terms of biological role, this is one of the proteins that bind and probably mediate the attachment of the 5S RNA into the large ribosomal subunit, where it forms part of the central protuberance. The sequence is that of Large ribosomal subunit protein uL18 from Clostridium perfringens (strain 13 / Type A).